Reading from the N-terminus, the 292-residue chain is Non-homologous end joining protein Ku (292 aa).

A Ku domain is found at 12-196 (KLSLVTCPVV…KITKDMVELA (185 aa)). Positions 231-292 (KPIKLPEPEE…RSAARQRKAG (62 aa)) are disordered. Over residues 271 to 292 (APAHRRPAKKAHRSAARQRKAG) the composition is skewed to basic residues.

The protein belongs to the prokaryotic Ku family. Homodimer. Interacts with LigD.

With LigD forms a non-homologous end joining (NHEJ) DNA repair enzyme, which repairs dsDNA breaks with reduced fidelity. Binds linear dsDNA with 5'- and 3'- overhangs but not closed circular dsDNA nor ssDNA. Recruits and stimulates the ligase activity of LigD. The sequence is that of Non-homologous end joining protein Ku from Bradyrhizobium sp. (strain ORS 278).